The following is a 233-amino-acid chain: 5'-methylthioadenosine/S-adenosylhomocysteine nucleosidase (233 aa).

Catalysis depends on Glu12, which acts as the Proton acceptor. Substrate is bound by residues Gly78, Ile152, and 173-174 (ME). Residue Asp197 is the Proton donor of the active site.

The protein belongs to the PNP/UDP phosphorylase family. MtnN subfamily. Homodimer.

It carries out the reaction S-adenosyl-L-homocysteine + H2O = S-(5-deoxy-D-ribos-5-yl)-L-homocysteine + adenine. The catalysed reaction is S-methyl-5'-thioadenosine + H2O = 5-(methylsulfanyl)-D-ribose + adenine. The enzyme catalyses 5'-deoxyadenosine + H2O = 5-deoxy-D-ribose + adenine. It functions in the pathway amino-acid biosynthesis; L-methionine biosynthesis via salvage pathway; S-methyl-5-thio-alpha-D-ribose 1-phosphate from S-methyl-5'-thioadenosine (hydrolase route): step 1/2. Catalyzes the irreversible cleavage of the glycosidic bond in both 5'-methylthioadenosine (MTA) and S-adenosylhomocysteine (SAH/AdoHcy) to adenine and the corresponding thioribose, 5'-methylthioribose and S-ribosylhomocysteine, respectively. Also cleaves 5'-deoxyadenosine, a toxic by-product of radical S-adenosylmethionine (SAM) enzymes, into 5-deoxyribose and adenine. Thus, is required for in vivo function of the radical SAM enzymes biotin synthase and lipoic acid synthase, that are inhibited by 5'-deoxyadenosine accumulation. The chain is 5'-methylthioadenosine/S-adenosylhomocysteine nucleosidase from Yersinia enterocolitica serotype O:8 / biotype 1B (strain NCTC 13174 / 8081).